Reading from the N-terminus, the 459-residue chain is MEQTEGNSSEDGTTVSPTAGNLETPGSQGIAEEVAEGTVGTSDKEGPSDWAEHLCKAASKSGESGGSPGEASILDELKTDLQGEARGKDEAQGDLAEEKVGKEDTTAASQEDTGKKEETKPEPNEVREKEEAMLASEKQKVDEKETNLESKEKSDVNDKAKPEPKEDAGAEVTVNEAETESQEEADVKDQAKPELPEVDGKETGSDTKELVEPESPTEEQEQGKENESEERAAVIPSSPEEWPESPTDEGPSLSPDGLAPESTGETSPSASESSPSEVPGSPTEPQPSEKKKDRAPERRVSAPSRPRGPRAQNRKAIMDKFGGAASGPTALFRNTKAAGAAIGGVKNMLLEWCRAMTRNYEHVDIQNFSSSWSSGMAFCALIHKFFPEAFDYAELDPAKRRHNFTLAFSTAEKLADCAQLLEVDDMVRLAVPDSKCVYTYIQELYRSLVQKGLVKTKKK.

The span at 1–27 (MEQTEGNSSEDGTTVSPTAGNLETPGS) shows a compositional bias: polar residues. Residues 1-314 (MEQTEGNSSE…RPRGPRAQNR (314 aa)) are disordered. 5 stretches are compositionally biased toward basic and acidic residues: residues 42 to 55 (SDKEGPSDWAEHLC), 75 to 105 (DELKTDLQGEARGKDEAQGDLAEEKVGKEDT), 112 to 168 (DTGK…KEDA), 185 to 211 (ADVKDQAKPELPEVDGKETGSDTKELV), and 221 to 232 (EQGKENESEERA). Residues 124 to 154 (NEVREKEEAMLASEKQKVDEKETNLESKEKS) adopt a coiled-coil conformation. Residues 260 to 283 (PESTGETSPSASESSPSEVPGSPT) are compositionally biased toward low complexity. Positions 287-300 (PSEKKKDRAPERRV) are enriched in basic and acidic residues. Ser-301 carries the post-translational modification Phosphoserine; by PKA and PKG. A Calponin-homology (CH) domain is found at 343–449 (GGVKNMLLEW…YIQELYRSLV (107 aa)). Residues 441-459 (IQELYRSLVQKGLVKTKKK) are calmodulin-binding.

Belongs to the smoothelin family. In terms of assembly, interacts with PPP1R12A. In terms of processing, maximal phosphorylation of Ser-301 correlates with maximal relaxation of aorta in response to acetylcholine. In terms of tissue distribution, widely expressed, with highest expression in skeletal muscles (at protein level). Within striated muscles, significantly more expressed in soleus muscle compared with plantaris muscle or white vastus (at protein level). 30-40% lower expression in females than in males (at protein level). Expressed in type 2a fibers, but not detected in fast twitch type 2b muscle white vastus nor in oxidative type I/b heart muscle (at protein level). Expressed within myometrial cells of the uterus, as well as in the endometrial layer. In the aorta, confined to smooth muscle cells. Not detected in endothelial cells.

It localises to the cytoplasm. The protein localises to the myofibril. It is found in the sarcomere. Its subcellular location is the i band. The protein resides in the m line. It localises to the nucleus. Its function is as follows. Plays a role in the regulation of contractile properties of both striated and smooth muscles. When unphosphorylated, may inhibit myosin dephosphorylation. Phosphorylation at Ser-301 reduces this inhibitory activity. This Mus musculus (Mouse) protein is Smoothelin-like protein 1 (Smtnl1).